The following is a 347-amino-acid chain: UPF0284 protein YN1551_0030 (347 aa).

Belongs to the UPF0284 family.

The protein is UPF0284 protein YN1551_0030 of Saccharolobus islandicus (strain Y.N.15.51 / Yellowstone #2) (Sulfolobus islandicus).